Reading from the N-terminus, the 141-residue chain is Hemoglobin subunit alpha (141 aa).

The 141-residue stretch at 1–141 folds into the Globin domain; the sequence is VLSPADKTNV…VSTVLTSKYR (141 aa). At S3 the chain carries Phosphoserine. K7 is modified (N6-succinyllysine). T8 bears the Phosphothreonine mark. At K11 the chain carries N6-succinyllysine. K16 bears the N6-acetyllysine; alternate mark. An N6-succinyllysine; alternate modification is found at K16. Phosphotyrosine is present on Y24. S35 carries the post-translational modification Phosphoserine. Residue K40 is modified to N6-succinyllysine. At S49 the chain carries Phosphoserine. H58 contacts O2. H87 lines the heme b pocket. S102 carries the post-translational modification Phosphoserine. At T108 the chain carries Phosphothreonine. Phosphoserine occurs at positions 124 and 131. A phosphothreonine mark is found at T134 and T137. S138 bears the Phosphoserine mark.

Belongs to the globin family. Heterotetramer of two alpha chains and two beta chains. As to expression, red blood cells.

In terms of biological role, involved in oxygen transport from the lung to the various peripheral tissues. Hemopressin acts as an antagonist peptide of the cannabinoid receptor CNR1. Hemopressin-binding efficiently blocks cannabinoid receptor CNR1 and subsequent signaling. This is Hemoglobin subunit alpha (HBA) from Taphozous georgianus (Sharp-nosed tomb bat).